A 148-amino-acid chain; its full sequence is MSKLSRHAAIRDAITSHPVQNQDELRRLLFKRGHRVTQATLSRDIHELGLVKTGEGYQFPSSEDDSNAAWLPSVERLIREFVYDVKIAQNTVVVKTSAGSAQPVAAALDAEGWPEVVGTVGGDDTIFVVTPSNKDAEKLQSRIKELIA.

It belongs to the ArgR family.

It localises to the cytoplasm. The protein operates within amino-acid biosynthesis; L-arginine biosynthesis [regulation]. Functionally, regulates arginine biosynthesis genes. This is Arginine repressor from Koribacter versatilis (strain Ellin345).